The following is a 382-amino-acid chain: Pyrimidine monooxygenase RutA (382 aa).

Residues 68–69 (IK), Asn-134, Glu-143, 159–160 (RY), and Ser-209 contribute to the FMN site.

This sequence belongs to the NtaA/SnaA/DszA monooxygenase family. RutA subfamily.

It catalyses the reaction uracil + FMNH2 + NADH + O2 = (Z)-3-ureidoacrylate + FMN + NAD(+) + H2O + H(+). The catalysed reaction is thymine + FMNH2 + NADH + O2 = (Z)-2-methylureidoacrylate + FMN + NAD(+) + H2O + H(+). In terms of biological role, catalyzes the pyrimidine ring opening between N-3 and C-4 by an unusual flavin hydroperoxide-catalyzed mechanism, adding oxygen atoms in the process to yield ureidoacrylate peracid, that immediately reacts with FMN forming ureidoacrylate and FMN-N(5)-oxide. The FMN-N(5)-oxide reacts spontaneously with NADH to produce FMN. Requires the flavin reductase RutF to regenerate FMN in vivo. This is Pyrimidine monooxygenase RutA from Escherichia coli (strain 55989 / EAEC).